The primary structure comprises 352 residues: uncharacterized protein (352 aa).

Residues 1-40 are disordered; sequence MTSTMKLFTDHAEISVRERPPQRNNNNQEQDNSNRPAPRR. The segment covering 8 to 21 has biased composition (basic and acidic residues); that stretch reads FTDHAEISVRERPP. Positions 22-36 are enriched in low complexity; that stretch reads QRNNNNQEQDNSNRP. Residues 317–333 traverse the membrane as a helical segment; that stretch reads MTITLPCGLTIAFFVYY.

It is found in the host cell membrane. This is an uncharacterized protein from Diadromus pulchellus idnoreovirus 1 (DpIRV-1).